Here is a 770-residue protein sequence, read N- to C-terminus: Coiled-coil alpha-helical rod protein 1 (770 aa).

3 coiled-coil regions span residues Ser-56–Ala-289, Leu-334–Gln-420, and Gly-476–Glu-669. Disordered regions lie at residues Leu-573–Gln-592, Leu-641–Arg-672, Asn-700–Cys-721, and Ser-744–Ser-770. Over residues Ala-648–Arg-672 the composition is skewed to basic and acidic residues. Positions Lys-701 to Cys-721 are enriched in low complexity.

It is found in the cytoplasm. It localises to the nucleus. Its function is as follows. May be a regulator of keratinocyte proliferation or differentiation. The sequence is that of Coiled-coil alpha-helical rod protein 1 (Cchcr1) from Mus musculus (Mouse).